A 248-amino-acid chain; its full sequence is Lysine-rich arabinogalactan protein 19 (248 aa).

Positions 1-24 (MESNSIIWSLLLASALISSFSVNA) are cleaved as a signal peptide. Residues 25–37 (QGPAASPVTSTTT) are compositionally biased toward low complexity. The segment at 25–221 (QGPAASPVTS…APSPNTNGGN (197 aa)) is disordered. Composition is skewed to pro residues over residues 38 to 57 (APPP…PTTT), 67 to 86 (PASP…PAPK), and 94 to 171 (ATPP…PAPA). Residues 173–187 (TKHKRKHKHKRHHHA) are compositionally biased toward basic residues. The span at 189–203 (APAPIPPSPPSPPVL) shows a compositional bias: pro residues. A lipid anchor (GPI-anchor amidated serine) is attached at Ser196. Positions 197-248 (PPSPPVLTDPQDTAPAPSPNTNGGNALNQLKGRAVMWLNTGLVILFLLAMTA) are cleaved as a propeptide — removed in mature form.

The protein belongs to the lysine-rich AGP family. O-glycosylated on the hydroxyproline residues. As to expression, strongly expressed in stems, moderately expressed in flowers and roots and weakly expressed in young leaves.

The protein localises to the cell membrane. Functionally, proteoglycan that seems to be implicated in diverse developmental roles such as differentiation, cell-cell recognition, embryogenesis and programmed cell death. The sequence is that of Lysine-rich arabinogalactan protein 19 (AGP19) from Arabidopsis thaliana (Mouse-ear cress).